Consider the following 407-residue polypeptide: 41 kDa spicule matrix protein (407 aa).

A signal peptide spans 1–17 (MKGVLFIVASLVAFATG). The C-type lectin domain occupies 29 to 160 (SGQSCYRYFN…PGRAPVMKRQ (132 aa)). Disordered stretches follow at residues 143–176 (PQNP…IPQG) and 204–407 (IGQQ…DALA). Positions 223–369 (NQPGMGGRQP…MGGRQPGMGG (147 aa)) are enriched in gly residues. Residues 370-398 (QQPNNPNNPNNPNNPNNPNNPNPRFNRPR) show a composition bias toward low complexity.

The protein belongs to the SM50 family. As to expression, expressed specifically in the micromere/primary mesenchyme cells (PMC) lineage.

It is found in the secreted. Functionally, major matrix protein of the sea urchin embryo spicule which directs crystal growth in certain orientations and inhibit growth in others. The polypeptide is 41 kDa spicule matrix protein (Hemicentrotus pulcherrimus (Sea urchin)).